A 207-amino-acid chain; its full sequence is Ribosomal RNA large subunit methyltransferase E (207 aa).

Residues Gly-61, Trp-63, Asp-81, Asp-97, and Asp-122 each coordinate S-adenosyl-L-methionine. The active-site Proton acceptor is Lys-162.

The protein belongs to the class I-like SAM-binding methyltransferase superfamily. RNA methyltransferase RlmE family.

The protein resides in the cytoplasm. It carries out the reaction uridine(2552) in 23S rRNA + S-adenosyl-L-methionine = 2'-O-methyluridine(2552) in 23S rRNA + S-adenosyl-L-homocysteine + H(+). Its function is as follows. Specifically methylates the uridine in position 2552 of 23S rRNA at the 2'-O position of the ribose in the fully assembled 50S ribosomal subunit. In Pseudomonas putida (strain ATCC 700007 / DSM 6899 / JCM 31910 / BCRC 17059 / LMG 24140 / F1), this protein is Ribosomal RNA large subunit methyltransferase E.